The sequence spans 494 residues: 4-trimethylaminobutyraldehyde dehydrogenase (494 aa).

Residue S2 is modified to N-acetylserine. At K30 the chain carries N6-acetyllysine; alternate. K30 bears the N6-succinyllysine; alternate mark. Position 59 is an N6-succinyllysine (K59). Residues K180 and G232–T236 contribute to the NAD(+) site. The Proton acceptor role is filled by E254. The active-site Nucleophile is the C288. At K298 the chain carries N6-acetyllysine. K303 is modified (N6-acetyllysine; alternate). K303 carries the post-translational modification N6-succinyllysine; alternate. An N6-acetyllysine modification is found at K344. Residue E391 participates in NAD(+) binding.

Belongs to the aldehyde dehydrogenase family. Homotetramer.

Its subcellular location is the cytoplasm. The protein resides in the cytosol. It catalyses the reaction 4-(trimethylamino)butanal + NAD(+) + H2O = 4-(trimethylamino)butanoate + NADH + 2 H(+). It carries out the reaction an aldehyde + NAD(+) + H2O = a carboxylate + NADH + 2 H(+). The catalysed reaction is 4-aminobutanal + NAD(+) + H2O = 4-aminobutanoate + NADH + 2 H(+). The enzyme catalyses formaldehyde + NAD(+) + H2O = formate + NADH + 2 H(+). It catalyses the reaction acetaldehyde + NAD(+) + H2O = acetate + NADH + 2 H(+). It carries out the reaction imidazole-4-acetaldehyde + NAD(+) + H2O = imidazole-4-acetate + NADH + 2 H(+). The catalysed reaction is acrolein + NAD(+) + H2O = acrylate + NADH + 2 H(+). The enzyme catalyses (5-hydroxyindol-3-yl)acetaldehyde + NAD(+) + H2O = (5-hydroxyindol-3-yl)acetate + NADH + 2 H(+). It catalyses the reaction 3,4-dihydroxyphenylacetaldehyde + NAD(+) + H2O = 3,4-dihydroxyphenylacetate + NADH + 2 H(+). It carries out the reaction spermine monoaldehyde + NAD(+) + H2O = N-(2-carboxyethyl)spermidine + NADH + 2 H(+). The catalysed reaction is propanal + NAD(+) + H2O = propanoate + NADH + 2 H(+). The enzyme catalyses butanal + NAD(+) + H2O = butanoate + NADH + 2 H(+). It catalyses the reaction pentanal + NAD(+) + H2O = pentanoate + NADH + 2 H(+). It carries out the reaction hexanal + NAD(+) + H2O = hexanoate + NADH + 2 H(+). Its pathway is amine and polyamine biosynthesis; carnitine biosynthesis. Functionally, converts gamma-trimethylaminobutyraldehyde into gamma-butyrobetaine with high efficiency (in vitro). Can catalyze the irreversible oxidation of a broad range of aldehydes to the corresponding acids in an NAD-dependent reaction, but with low efficiency. Catalyzes the oxidation of aldehydes arising from biogenic amines and polyamines. The protein is 4-trimethylaminobutyraldehyde dehydrogenase of Mus musculus (Mouse).